We begin with the raw amino-acid sequence, 274 residues long: NH(3)-dependent NAD(+) synthetase (274 aa).

Residue 46 to 53 participates in ATP binding; sequence GISGGQDS. Asp-52 is a Mg(2+) binding site. Arg-140 serves as a coordination point for deamido-NAD(+). ATP is bound at residue Thr-160. Glu-165 contributes to the Mg(2+) binding site. The deamido-NAD(+) site is built by Lys-173 and Asp-180. ATP is bound by residues Lys-189 and Thr-211. 260–261 lines the deamido-NAD(+) pocket; the sequence is HK.

It belongs to the NAD synthetase family. As to quaternary structure, homodimer.

The enzyme catalyses deamido-NAD(+) + NH4(+) + ATP = AMP + diphosphate + NAD(+) + H(+). It functions in the pathway cofactor biosynthesis; NAD(+) biosynthesis; NAD(+) from deamido-NAD(+) (ammonia route): step 1/1. Its function is as follows. Catalyzes the ATP-dependent amidation of deamido-NAD to form NAD. Uses ammonia as a nitrogen source. The sequence is that of NH(3)-dependent NAD(+) synthetase from Pectobacterium carotovorum subsp. carotovorum (strain PC1).